The sequence spans 438 residues: Glutamate-1-semialdehyde 2,1-aminomutase (438 aa).

Residue Lys-277 is modified to N6-(pyridoxal phosphate)lysine.

This sequence belongs to the class-III pyridoxal-phosphate-dependent aminotransferase family. HemL subfamily. As to quaternary structure, homodimer. Requires pyridoxal 5'-phosphate as cofactor.

It is found in the cytoplasm. It carries out the reaction (S)-4-amino-5-oxopentanoate = 5-aminolevulinate. It participates in porphyrin-containing compound metabolism; protoporphyrin-IX biosynthesis; 5-aminolevulinate from L-glutamyl-tRNA(Glu): step 2/2. The protein operates within porphyrin-containing compound metabolism; chlorophyll biosynthesis. The chain is Glutamate-1-semialdehyde 2,1-aminomutase from Synechococcus sp. (strain CC9311).